An 805-amino-acid chain; its full sequence is Sucrose synthase (805 aa).

The segment at 275–752 (MVFNVVILSP…GLQRIEEKYT (478 aa)) is GT-B glycosyltransferase.

It belongs to the glycosyltransferase 1 family. Plant sucrose synthase subfamily.

It carries out the reaction an NDP-alpha-D-glucose + D-fructose = a ribonucleoside 5'-diphosphate + sucrose + H(+). In terms of biological role, sucrose-cleaving enzyme that provides UDP-glucose and fructose for various metabolic pathways. This Vigna radiata var. radiata (Mung bean) protein is Sucrose synthase (SS1).